The following is a 265-amino-acid chain: Dehydrogenase RED2 (265 aa).

The helical transmembrane segment at 6–26 (SFLLSKLFLCIALCTAYVAFS) threads the bilayer. An N-linked (GlcNAc...) asparagine glycan is attached at asparagine 45. Residues 47 to 67 (TSTVFGLTIVAIGLSALSSWL) form a helical membrane-spanning segment. The N-linked (GlcNAc...) asparagine glycan is linked to asparagine 74. Residue valine 89 coordinates NADP(+). A glycan (N-linked (GlcNAc...) asparagine) is linked at asparagine 127. Aspartate 136 and asparagine 163 together coordinate NADP(+). Asparagine 176 carries N-linked (GlcNAc...) asparagine glycosylation. Serine 216 functions as the Proton donor in the catalytic mechanism. Residues tyrosine 228 and lysine 232 each contribute to the NADP(+) site. Tyrosine 228 acts as the Proton acceptor in catalysis. Lysine 232 (lowers pKa of active site Tyr) is an active-site residue.

It belongs to the short-chain dehydrogenases/reductases (SDR) family.

Its subcellular location is the membrane. It catalyses the reaction a primary alcohol + NAD(+) = an aldehyde + NADH + H(+). The catalysed reaction is a secondary alcohol + NAD(+) = a ketone + NADH + H(+). Its pathway is mycotoxin biosynthesis. Dehydrogenase; part of the Tox1B locus, one of the 2 loci that mediate the biosynthesis of T-toxin, a family of linear polyketides 37 to 45 carbons in length, of which the major component is 41 carbons, and which leads to high virulence to maize. One of the PKSs (PKS1 or PKS2) could synthesize a precursor, used subsequently by the other PKS as starter unit, to add additional carbons. Variability in the length of the final carbon backbone C35-47 could be achieved by varying the number of condensation cycles, or use of different starter or extender units or might be due to decarboxylation of the penultimate product, catalyzed by DEC1. Additional proteins are required for the biosynthesis of T-toxin, including oxidoreductases RED1, RED2, RED3, LAM1 and OXI1, as well as esterase TOX9. The sequence is that of Dehydrogenase RED2 from Cochliobolus heterostrophus (strain C4 / ATCC 48331 / race T) (Southern corn leaf blight fungus).